An 89-amino-acid chain; its full sequence is MALTQQRKQEIINNYQVHGTDTGSTDVQIAMLTERINRLSEHLQANKKDHSSRRGLLKLIGHRKRLLAYLQQESREKYQALIGRLGIRG.

The protein belongs to the universal ribosomal protein uS15 family. In terms of assembly, part of the 30S ribosomal subunit. Forms a bridge to the 50S subunit in the 70S ribosome, contacting the 23S rRNA.

One of the primary rRNA binding proteins, it binds directly to 16S rRNA where it helps nucleate assembly of the platform of the 30S subunit by binding and bridging several RNA helices of the 16S rRNA. Functionally, forms an intersubunit bridge (bridge B4) with the 23S rRNA of the 50S subunit in the ribosome. This Nostoc sp. (strain PCC 7120 / SAG 25.82 / UTEX 2576) protein is Small ribosomal subunit protein uS15.